The chain runs to 96 residues: Integration host factor subunit beta (96 aa).

It belongs to the bacterial histone-like protein family. As to quaternary structure, heterodimer of an alpha and a beta chain.

In terms of biological role, this protein is one of the two subunits of integration host factor, a specific DNA-binding protein that functions in genetic recombination as well as in transcriptional and translational control. This chain is Integration host factor subunit beta, found in Dichelobacter nodosus (strain VCS1703A).